The primary structure comprises 394 residues: Elongation factor Tu (394 aa).

Residues 10–204 (KPHVNVGTIG…ALDTYIPEPE (195 aa)) form the tr-type G domain. Positions 19–26 (GHVDHGKT) are G1. Position 19–26 (19–26 (GHVDHGKT)) interacts with GTP. Mg(2+) is bound at residue threonine 26. The tract at residues 60–64 (GITIN) is G2. The tract at residues 81–84 (DCPG) is G3. Residues 81-85 (DCPGH) and 136-139 (NKCD) each bind GTP. The G4 stretch occupies residues 136 to 139 (NKCD). The G5 stretch occupies residues 174–176 (SAL).

It belongs to the TRAFAC class translation factor GTPase superfamily. Classic translation factor GTPase family. EF-Tu/EF-1A subfamily. In terms of assembly, monomer.

The protein resides in the cytoplasm. The catalysed reaction is GTP + H2O = GDP + phosphate + H(+). Its function is as follows. GTP hydrolase that promotes the GTP-dependent binding of aminoacyl-tRNA to the A-site of ribosomes during protein biosynthesis. The sequence is that of Elongation factor Tu from Shewanella sediminis (strain HAW-EB3).